The following is a 396-amino-acid chain: Phospholipase A1-II 4 (396 aa).

The active-site Acyl-ester intermediate is Ser-221. Active-site charge relay system residues include Ser-221, Asp-282, and His-319.

It belongs to the AB hydrolase superfamily. Lipase family.

The protein resides in the cytoplasm. In terms of biological role, acylhydrolase that catalyzes the hydrolysis of phospholipids at the sn-1 position. The polypeptide is Phospholipase A1-II 4 (Oryza sativa subsp. japonica (Rice)).